The sequence spans 400 residues: Mu-type opioid receptor (400 aa).

The Extracellular segment spans residues 1 to 68 (MDSSAAPTNA…CPPTGSPSMI (68 aa)). 5 N-linked (GlcNAc...) asparagine glycosylation sites follow: N9, N12, N33, N40, and N48. Residues 69–93 (TAITIMALYSIVCVVGLFGNFLVMY) form a helical membrane-spanning segment. Topologically, residues 94–106 (VIVRYTKMKTATN) are cytoplasmic. Residues 107 to 131 (IYIFNLALADALATSTLPFQSVNYL) traverse the membrane as a helical segment. Topologically, residues 132-142 (MGTWPFGTILC) are extracellular. An intrachain disulfide couples C142 to C219. The chain crosses the membrane as a helical span at residues 143–165 (KIVISIDYYNMFTSIFTLCTMSV). Over 166–185 (DRYIAVCHPVKALDFRTPRN) the chain is Cytoplasmic. Y168 carries the post-translational modification Phosphotyrosine. Residues 186–207 (AKIINVCNWILSSAIGLPVMFM) traverse the membrane as a helical segment. Residues 208 to 230 (ATTKYRQGSIDCTLTFSHPTWYW) lie on the Extracellular side of the membrane. The chain crosses the membrane as a helical span at residues 231-255 (ENLLKICVFIFAFIMPVLIITVCYG). Topologically, residues 256–279 (LMILRLKSVRMLSGSKEKDRNLRR) are cytoplasmic. Residues 280 to 306 (ITRMVLVVVAVFIVCWTPIHIYVIIKA) form a helical membrane-spanning segment. Residues 307 to 314 (LVTIPETT) lie on the Extracellular side of the membrane. The chain crosses the membrane as a helical span at residues 315–338 (FQTVSWHFCIALGYTNSCLNPVLY). The NPxxY; plays a role in stabilizing the activated conformation of the receptor signature appears at 334 to 338 (NPVLY). Over 339–400 (AFLDENFKRC…NLEAETAPLP (62 aa)) the chain is Cytoplasmic. C353 carries the S-palmitoyl cysteine lipid modification. Phosphoserine is present on S365. T372 is subject to Phosphothreonine. Position 377 is a phosphoserine (S377). T396 carries the post-translational modification Phosphothreonine.

This sequence belongs to the G-protein coupled receptor 1 family. Forms homooligomers and heterooligomers with other GPCRs, such as OPRD1, OPRK1, OPRL1, NPFFR2, ADRA2A, SSTR2, CNR1 and CCR5 (probably in dimeric forms). Interacts with heterotrimeric G proteins; interaction with a heterotrimeric complex containing GNAI1, GNB1 and GNG2 stabilizes the active conformation of the receptor and increases its affinity for endomorphin-2, the synthetic opioid peptide DAMGO and for morphinan agonists. Interacts with PPL; the interaction disrupts agonist-mediated G-protein activation. Interacts (via C-terminus) with DNAJB4 (via C-terminus). Interacts with calmodulin; the interaction inhibits the constitutive activity of OPRM1; it abolishes basal and attenuates agonist-stimulated G-protein coupling. Interacts with FLNA, PLD2, RANBP9 and WLS and GPM6A. Interacts with RTP4. Interacts with SYP and GNAS. Interacts with RGS9, RGS17, RGS20, RGS4, PPP1R9B and HINT1. Phosphorylated. Differentially phosphorylated in basal and agonist-induced conditions. Agonist-mediated phosphorylation modulates receptor internalization. Phosphorylated by GRK2 in a agonist-dependent manner. Phosphorylation at Tyr-168 requires receptor activation, is dependent on non-receptor protein tyrosine kinase Src and results in a decrease in agonist efficacy by reducing G-protein coupling efficiency. Phosphorylated on tyrosine residues; the phosphorylation is involved in agonist-induced G-protein-independent receptor down-regulation. Phosphorylation at Ser-377 is involved in G-protein-dependent but not beta-arrestin-dependent activation of the ERK pathway. Post-translationally, ubiquitinated. A basal ubiquitination seems not to be related to degradation. Ubiquitination is increased upon formation of OPRM1:OPRD1 oligomers leading to proteasomal degradation; the ubiquitination is diminished by RTP4. Expressed in brain. Isoform 16 and isoform 17 are detected in brain.

It is found in the cell membrane. It localises to the cell projection. The protein localises to the axon. The protein resides in the perikaryon. Its subcellular location is the dendrite. It is found in the endosome. It localises to the cytoplasm. In terms of biological role, receptor for endogenous opioids such as beta-endorphin and endomorphin. Receptor for natural and synthetic opioids including morphine, heroin, DAMGO, fentanyl, etorphine, buprenorphin and methadone. Also activated by enkephalin peptides, such as Met-enkephalin or Met-enkephalin-Arg-Phe, with higher affinity for Met-enkephalin-Arg-Phe. Agonist binding to the receptor induces coupling to an inactive GDP-bound heterotrimeric G-protein complex and subsequent exchange of GDP for GTP in the G-protein alpha subunit leading to dissociation of the G-protein complex with the free GTP-bound G-protein alpha and the G-protein beta-gamma dimer activating downstream cellular effectors. The agonist- and cell type-specific activity is predominantly coupled to pertussis toxin-sensitive G(i) and G(o) G alpha proteins, GNAI1, GNAI2, GNAI3 and GNAO1 isoforms Alpha-1 and Alpha-2, and to a lesser extent to pertussis toxin-insensitive G alpha proteins GNAZ and GNA15. They mediate an array of downstream cellular responses, including inhibition of adenylate cyclase activity and both N-type and L-type calcium channels, activation of inward rectifying potassium channels, mitogen-activated protein kinase (MAPK), phospholipase C (PLC), phosphoinositide/protein kinase (PKC), phosphoinositide 3-kinase (PI3K) and regulation of NF-kappa-B. Also couples to adenylate cyclase stimulatory G alpha proteins. The selective temporal coupling to G-proteins and subsequent signaling can be regulated by RGSZ proteins, such as RGS9, RGS17 and RGS4. Phosphorylation by members of the GPRK subfamily of Ser/Thr protein kinases and association with beta-arrestins is involved in short-term receptor desensitization. Beta-arrestins associate with the GPRK-phosphorylated receptor and uncouple it from the G-protein thus terminating signal transduction. The phosphorylated receptor is internalized through endocytosis via clathrin-coated pits which involves beta-arrestins. The activation of the ERK pathway occurs either in a G-protein-dependent or a beta-arrestin-dependent manner and is regulated by agonist-specific receptor phosphorylation. Acts as a class A G-protein coupled receptor (GPCR) which dissociates from beta-arrestin at or near the plasma membrane and undergoes rapid recycling. Receptor down-regulation pathways are varying with the agonist and occur dependent or independent of G-protein coupling. Endogenous ligands induce rapid desensitization, endocytosis and recycling. Heterooligomerization with other GPCRs can modulate agonist binding, signaling and trafficking properties. Couples to GNAS and is proposed to be involved in excitatory effects. Its function is as follows. Does not bind agonists but may act through oligomerization with binding-competent OPRM1 isoforms and reduce their ligand binding activity. The protein is Mu-type opioid receptor (OPRM1) of Homo sapiens (Human).